The chain runs to 401 residues: Argininosuccinate synthase (401 aa).

ATP-binding positions include 10 to 18 and Ala-38; that span reads AYSGGVDTS. An L-citrulline-binding site is contributed by Tyr-89. Gly-119 is an ATP binding site. L-aspartate contacts are provided by Thr-121, Asn-125, and Asp-126. Asn-125 serves as a coordination point for L-citrulline. Arg-129, Ser-177, Ser-186, Glu-262, and Tyr-274 together coordinate L-citrulline.

The protein belongs to the argininosuccinate synthase family. Type 1 subfamily. In terms of assembly, homotetramer.

Its subcellular location is the cytoplasm. The catalysed reaction is L-citrulline + L-aspartate + ATP = 2-(N(omega)-L-arginino)succinate + AMP + diphosphate + H(+). The protein operates within amino-acid biosynthesis; L-arginine biosynthesis; L-arginine from L-ornithine and carbamoyl phosphate: step 2/3. The chain is Argininosuccinate synthase from Prochlorococcus marinus (strain MIT 9303).